Here is a 175-residue protein sequence, read N- to C-terminus: Thioredoxin M-type, chloroplastic (175 aa).

The N-terminal 62 residues, 1–62 (MALETCLRGW…ARRPSRFVCK (62 aa)), are a transit peptide targeting the chloroplast. Residues 63–174 (CKNVVDEVIV…LCTIIDKYIG (112 aa)) enclose the Thioredoxin domain. A disulfide bond links Cys98 and Cys101.

It belongs to the thioredoxin family. Plant M-type subfamily. Forms a complex with heterodimeric ferredoxin-thioredoxin reductase (FTR) and ferredoxin.

The protein localises to the plastid. The protein resides in the chloroplast. Functionally, participates in various redox reactions through the reversible oxidation of the active center dithiol to a disulfide. The M form is known to activate NADP-malate dehydrogenase. This is Thioredoxin M-type, chloroplastic from Triticum aestivum (Wheat).